Reading from the N-terminus, the 451-residue chain is Trimethylamine monooxygenase (451 aa).

FAD is bound by residues S12, E37, Q39, L45, W46, and H62. NADP(+) is bound by residues W70 and N72. The FAD site is built by N72 and V125. S204, S205, S207, and R228 together coordinate NADP(+). FAD is bound by residues Q317 and T320. Position 411 (R411) interacts with NADP(+).

This sequence belongs to the FMO family. FAD is required as a cofactor.

The catalysed reaction is trimethylamine + NADPH + O2 = trimethylamine N-oxide + NADP(+) + H2O. Its function is as follows. Catalyzes the oxidation of trimethylamine (TMA) to produce trimethylamine N-oxide (TMAO). In vitro, has a broad substrate specificity, oxidizing many nitrogen- and sulfur-containing compounds, including dimethylamine (DMA), dimethylsulfide (DMS), dimethylsulfoxide (DMSO), cysteamine, methimazole and dimethylaniline. The sequence is that of Trimethylamine monooxygenase from Methylocella silvestris (strain DSM 15510 / CIP 108128 / LMG 27833 / NCIMB 13906 / BL2).